The following is a 260-amino-acid chain: Type III pantothenate kinase (260 aa).

Residue Asp6 to Thr13 coordinates ATP. A substrate-binding site is contributed by Gly107–Arg110. The Proton acceptor role is filled by Asp109. Asp129 contacts K(+). Thr132 provides a ligand contact to ATP. Thr184 lines the substrate pocket.

The protein belongs to the type III pantothenate kinase family. Homodimer. It depends on NH4(+) as a cofactor. The cofactor is K(+).

It is found in the cytoplasm. The catalysed reaction is (R)-pantothenate + ATP = (R)-4'-phosphopantothenate + ADP + H(+). It participates in cofactor biosynthesis; coenzyme A biosynthesis; CoA from (R)-pantothenate: step 1/5. In terms of biological role, catalyzes the phosphorylation of pantothenate (Pan), the first step in CoA biosynthesis. The sequence is that of Type III pantothenate kinase from Agathobacter rectalis (strain ATCC 33656 / DSM 3377 / JCM 17463 / KCTC 5835 / VPI 0990) (Eubacterium rectale).